The primary structure comprises 150 residues: Nucleoside diphosphate kinase (150 aa).

ATP contacts are provided by Lys-9, Phe-57, Arg-85, Thr-91, Arg-102, and Asn-112. His-115 serves as the catalytic Pros-phosphohistidine intermediate.

Belongs to the NDK family. As to quaternary structure, homotetramer. Mg(2+) serves as cofactor.

The protein resides in the cytoplasm. It carries out the reaction a 2'-deoxyribonucleoside 5'-diphosphate + ATP = a 2'-deoxyribonucleoside 5'-triphosphate + ADP. The catalysed reaction is a ribonucleoside 5'-diphosphate + ATP = a ribonucleoside 5'-triphosphate + ADP. Its function is as follows. Major role in the synthesis of nucleoside triphosphates other than ATP. The ATP gamma phosphate is transferred to the NDP beta phosphate via a ping-pong mechanism, using a phosphorylated active-site intermediate. The sequence is that of Nucleoside diphosphate kinase from Symbiobacterium thermophilum (strain DSM 24528 / JCM 14929 / IAM 14863 / T).